We begin with the raw amino-acid sequence, 210 residues long: Orotate phosphoribosyltransferase (210 aa).

5-phospho-alpha-D-ribose 1-diphosphate is bound by residues arginine 96, lysine 100, histidine 102, and 122–130 (EDLISTGGS). Serine 126 is a binding site for orotate.

The protein belongs to the purine/pyrimidine phosphoribosyltransferase family. PyrE subfamily. Homodimer. The cofactor is Mg(2+).

The enzyme catalyses orotidine 5'-phosphate + diphosphate = orotate + 5-phospho-alpha-D-ribose 1-diphosphate. Its pathway is pyrimidine metabolism; UMP biosynthesis via de novo pathway; UMP from orotate: step 1/2. In terms of biological role, catalyzes the transfer of a ribosyl phosphate group from 5-phosphoribose 1-diphosphate to orotate, leading to the formation of orotidine monophosphate (OMP). The protein is Orotate phosphoribosyltransferase of Streptococcus pneumoniae serotype 4 (strain ATCC BAA-334 / TIGR4).